The primary structure comprises 1212 residues: DNA-directed RNA polymerase subunit beta (1212 aa).

The segment covering 1176–1195 has biased composition (basic and acidic residues); that stretch reads QQEKKKLAEEAAKKDDKSAE. The tract at residues 1176–1212 is disordered; the sequence is QQEKKKLAEEAAKKDDKSAEPVDQSDSSTSSDDKVSK.

It belongs to the RNA polymerase beta chain family. The RNAP catalytic core consists of 2 alpha, 1 beta, 1 beta' and 1 omega subunit. When a sigma factor is associated with the core the holoenzyme is formed, which can initiate transcription.

The catalysed reaction is RNA(n) + a ribonucleoside 5'-triphosphate = RNA(n+1) + diphosphate. Functionally, DNA-dependent RNA polymerase catalyzes the transcription of DNA into RNA using the four ribonucleoside triphosphates as substrates. The sequence is that of DNA-directed RNA polymerase subunit beta from Lactobacillus gasseri (strain ATCC 33323 / DSM 20243 / BCRC 14619 / CIP 102991 / JCM 1131 / KCTC 3163 / NCIMB 11718 / NCTC 13722 / AM63).